Reading from the N-terminus, the 432-residue chain is Glutamyl-tRNA reductase (432 aa).

Substrate is bound by residues 49 to 52, S101, 106 to 108, and Q112; these read TCNR and EPQ. C50 serves as the catalytic Nucleophile. 181-186 contacts NADP(+); that stretch reads GAGETI. The disordered stretch occupies residues 408–432; that stretch reads PEKPGYRHPPVATPIVRTDDANPAP.

Belongs to the glutamyl-tRNA reductase family. In terms of assembly, homodimer.

The catalysed reaction is (S)-4-amino-5-oxopentanoate + tRNA(Glu) + NADP(+) = L-glutamyl-tRNA(Glu) + NADPH + H(+). Its pathway is porphyrin-containing compound metabolism; protoporphyrin-IX biosynthesis; 5-aminolevulinate from L-glutamyl-tRNA(Glu): step 1/2. Catalyzes the NADPH-dependent reduction of glutamyl-tRNA(Glu) to glutamate 1-semialdehyde (GSA). This chain is Glutamyl-tRNA reductase, found in Xanthomonas campestris pv. campestris (strain B100).